A 600-amino-acid chain; its full sequence is Proline--tRNA ligase (600 aa).

The protein belongs to the class-II aminoacyl-tRNA synthetase family. ProS type 1 subfamily. As to quaternary structure, homodimer.

It localises to the cytoplasm. The enzyme catalyses tRNA(Pro) + L-proline + ATP = L-prolyl-tRNA(Pro) + AMP + diphosphate. Its function is as follows. Catalyzes the attachment of proline to tRNA(Pro) in a two-step reaction: proline is first activated by ATP to form Pro-AMP and then transferred to the acceptor end of tRNA(Pro). As ProRS can inadvertently accommodate and process non-cognate amino acids such as alanine and cysteine, to avoid such errors it has two additional distinct editing activities against alanine. One activity is designated as 'pretransfer' editing and involves the tRNA(Pro)-independent hydrolysis of activated Ala-AMP. The other activity is designated 'posttransfer' editing and involves deacylation of mischarged Ala-tRNA(Pro). The misacylated Cys-tRNA(Pro) is not edited by ProRS. The chain is Proline--tRNA ligase from Synechococcus sp. (strain RCC307).